Here is a 419-residue protein sequence, read N- to C-terminus: Putative actin-fragmin kinase DDB_G0279609 (419 aa).

A disordered region spans residues 73–94 (INNNNNSINNNNNNNNKNKNKN).

It belongs to the protein kinase superfamily. AFK Ser/Thr protein kinase family.

This chain is Putative actin-fragmin kinase DDB_G0279609, found in Dictyostelium discoideum (Social amoeba).